Consider the following 213-residue polypeptide: Probable aspartate aminotransferase (213 aa).

3 residues coordinate L-aspartate: Gly47, Trp133, and Asn183.

Belongs to the class-I pyridoxal-phosphate-dependent aminotransferase family. Homodimer. The cofactor is pyridoxal 5'-phosphate.

Its subcellular location is the cytoplasm. It carries out the reaction L-aspartate + 2-oxoglutarate = oxaloacetate + L-glutamate. The chain is Probable aspartate aminotransferase (aspC) from Streptomyces griseus.